A 145-amino-acid chain; its full sequence is Putative sterol 14-demethylase-like protein (145 aa).

The chain crosses the membrane as a helical span at residues 5–25 (YYTLLKTSVAIIIVFVVAKLI).

This sequence belongs to the cytochrome P450 family. As to expression, expressed specifically in roots.

The protein localises to the membrane. This Arabidopsis thaliana (Mouse-ear cress) protein is Putative sterol 14-demethylase-like protein (CYP51G2).